Here is a 185-residue protein sequence, read N- to C-terminus: Nuclear transcription factor Y subunit B-3 (185 aa).

The span at 1–36 (MADGPGSPGGGGGSHESGSPRGGGGGGGGGGGGGGV) shows a compositional bias: gly residues. Residues 1–39 (MADGPGSPGGGGGSHESGSPRGGGGGGGGGGGGGGVREQ) form a disordered region. A DNA-binding region spans residues 43-49 (LPIANIS). The segment at 70-81 (VQECVSEFISFI) is subunit association domain (SAD). The tract at residues 145–164 (KDVLGSHGGSSSSAQGMGQQ) is disordered. Residues 153-164 (GSSSSAQGMGQQ) are compositionally biased toward low complexity.

The protein belongs to the NFYB/HAP3 subunit family. Heterotrimeric transcription factor composed of three components, NF-YA, NF-YB and NF-YC. NF-YB and NF-YC must interact and dimerize for NF-YA association and DNA binding. Ubiquitous.

The protein localises to the nucleus. Its function is as follows. Component of the NF-Y/HAP transcription factor complex. The NF-Y complex stimulates the transcription of various genes by recognizing and binding to a CCAAT motif in promoters. May regulate the expression of photosynthetic genes, and may be involved in chloroplast and amyloplast development. The chain is Nuclear transcription factor Y subunit B-3 (NFYB3) from Oryza sativa subsp. japonica (Rice).